A 79-amino-acid polypeptide reads, in one-letter code: U-actitoxin-Avd8a (79 aa).

Positions 1–19 (MKSLVIVFVVLLGVAMISA) are cleaved as a signal peptide. Residues 20–36 (NEEELLAILQDQRNDAR) constitute a propeptide that is removed on maturation.

Belongs to the sea anemone 8 toxin family.

The protein resides in the secreted. Its subcellular location is the nematocyst. The protein is U-actitoxin-Avd8a of Anemonia viridis (Snakelocks anemone).